We begin with the raw amino-acid sequence, 125 residues long: Large ribosomal subunit protein uL18 (125 aa).

Glycine 2 is subject to N-acetylglycine. N6-acetyllysine occurs at positions 5 and 48.

This sequence belongs to the universal ribosomal protein uL18 family. As to quaternary structure, component of the large ribosomal subunit (LSU). Part of the 5S RNP complex, which is a LSU subcomplex composed of the 5S RNA, RPL5 and RPL11. Component of a hexameric 5S RNP precursor complex, composed of 5S RNA, RRS1, RPF2/BXDC1, RPL5, RPL11 and HEATR3; this complex acts as a precursor for ribosome assembly. Interacts with NVL in an ATP-dependent manner. Interacts with RRP1B. Interacts with IPO5, IPO7 and KPNB1; these interactions may be involved in RPL5 nuclear import for the assembly of ribosomal subunits. Interacts with RRP1B.

Its subcellular location is the cytoplasm. The protein resides in the nucleus. It localises to the nucleolus. Its function is as follows. Component of the ribosome, a large ribonucleoprotein complex responsible for the synthesis of proteins in the cell. The small ribosomal subunit (SSU) binds messenger RNAs (mRNAs) and translates the encoded message by selecting cognate aminoacyl-transfer RNA (tRNA) molecules. The large subunit (LSU) contains the ribosomal catalytic site termed the peptidyl transferase center (PTC), which catalyzes the formation of peptide bonds, thereby polymerizing the amino acids delivered by tRNAs into a polypeptide chain. The nascent polypeptides leave the ribosome through a tunnel in the LSU and interact with protein factors that function in enzymatic processing, targeting, and the membrane insertion of nascent chains at the exit of the ribosomal tunnel. As part of the 5S RNP/5S ribonucleoprotein particle it is an essential component of the LSU, required for its formation and the maturation of rRNAs. It also couples ribosome biogenesis to p53/TP53 activation. As part of the 5S RNP it accumulates in the nucleoplasm and inhibits MDM2, when ribosome biogenesis is perturbed, mediating the stabilization and the activation of TP53. This Sus scrofa (Pig) protein is Large ribosomal subunit protein uL18 (RPL5).